Reading from the N-terminus, the 729-residue chain is Catalase-peroxidase (729 aa).

Residues 95–218 (WHSAGTYRGA…LAAVEMGLVY (124 aa)) constitute a cross-link (tryptophyl-tyrosyl-methioninium (Trp-Tyr) (with M-244)). The active-site Proton acceptor is histidine 96. The segment at residues 218 to 244 (YVNPEGPHGHPDPVASGPDVRDTFARM) is a cross-link (tryptophyl-tyrosyl-methioninium (Tyr-Met) (with W-95)). Position 259 (histidine 259) interacts with heme b.

This sequence belongs to the peroxidase family. Peroxidase/catalase subfamily. As to quaternary structure, homodimer or homotetramer. Requires heme b as cofactor. Formation of the three residue Trp-Tyr-Met cross-link is important for the catalase, but not the peroxidase activity of the enzyme.

The enzyme catalyses H2O2 + AH2 = A + 2 H2O. It carries out the reaction 2 H2O2 = O2 + 2 H2O. Its function is as follows. Bifunctional enzyme with both catalase and broad-spectrum peroxidase activity. The polypeptide is Catalase-peroxidase (Synechococcus sp. (strain CC9605)).